The primary structure comprises 689 residues: Beta-adrenergic receptor kinase 1 (689 aa).

An N-terminal region spans residues 1 to 190; sequence MADLEAVLAD…ELNIHLTMND (190 aa). Positions 54-175 constitute an RGS domain; that stretch reads TFEKIFSQKL…IESDKFTRFC (122 aa). In terms of domain architecture, Protein kinase spans 191–453; the sequence is FSVHRIIGRG…AQEVKESPFF (263 aa). Residues 197 to 205 and Lys220 contribute to the ATP site; that span reads IGRGGFGEV. The active-site Proton acceptor is the Asp317. Residues 454–521 form the AGC-kinase C-terminal domain; sequence RSLDWQMVFL…TISERWQQEV (68 aa). In terms of domain architecture, PH spans 558-652; that stretch reads DCIVHGYMSK…WKKELRDAYR (95 aa). Position 670 is a phosphoserine (Ser670).

Belongs to the protein kinase superfamily. AGC Ser/Thr protein kinase family. GPRK subfamily. In terms of assembly, interacts with the heterodimer formed by GNB1 and GNG2. Interacts with GIT1. Interacts with, and phosphorylates chemokine-stimulated CCR5. Interacts with ARRB1. Interacts with LPAR1 and LPAR2. Interacts with RALA in response to LPAR1 activation. ADRBK1 and RALA mutually inhibit each other's binding to LPAR1. Interacts with ADRB2.

The protein localises to the cytoplasm. It localises to the cell membrane. It is found in the postsynapse. Its subcellular location is the presynapse. It catalyses the reaction [beta-adrenergic receptor] + ATP = [beta-adrenergic receptor]-phosphate + ADP + H(+). Its activity is regulated as follows. In contrast to other AGC family kinases, the catalytic activity is solely regulated by the binding of substrates and ligands, not by phosphorylation of the kinase domain. Its function is as follows. Specifically phosphorylates the agonist-occupied form of the beta-adrenergic and closely related receptors, probably inducing a desensitization of them. Key regulator of LPAR1 signaling. Competes with RALA for binding to LPAR1 thus affecting the signaling properties of the receptor. Desensitizes LPAR1 and LPAR2 in a phosphorylation-independent manner. Positively regulates ciliary smoothened (SMO)-dependent Hedgehog (Hh) signaling pathway by facilitating the trafficking of SMO into the cilium and the stimulation of SMO activity. Inhibits relaxation of airway smooth muscle in response to blue light. In Mus musculus (Mouse), this protein is Beta-adrenergic receptor kinase 1.